The primary structure comprises 247 residues: MEQLFVDDPAFASSMSSLEADIFSGAGQLPSSPWLDLDLDDDVQDLSMAPTTANAVSSGYGSGGSGSHRKLSHNAYERDRRKQLNELYSSLRALLPDADHTKLSIPTTVSRVLKYIPELQKQVENLERKKKELTTTSTTNCKPGVLGSQLMSEGMAPIVSATCINDMEIMVQVSLLSNVAGSVLPLSKCIKVLENEGLHFISSSTSSGFGNRTFYSIHLQRSEGTINEECPAFCERLEKVVRNKAKL.

The Nuclear localization signal motif lies at 68–75; that stretch reads HRKLSHNA. The interval 68-81 is basic motif; sequence HRKLSHNAYERDRR. The region spanning 68–119 is the bHLH domain; it reads HRKLSHNAYERDRRKQLNELYSSLRALLPDADHTKLSIPTTVSRVLKYIPEL. Positions 82–119 are helix-loop-helix motif; that stretch reads KQLNELYSSLRALLPDADHTKLSIPTTVSRVLKYIPEL.

Belongs to the bHLH protein family. In terms of assembly, forms homodimers. Interacts with BHLH156 in the nucleus. As to expression, expressed constitutively at low levels in the roots. Also observed in flowers, developing seeds, embryos and vascular bundles.

The protein resides in the nucleus. The protein localises to the cytoplasm. Its function is as follows. Transcription activator that binds to the DNA motif 5'-CACGTGG-3' in the promoter of iron (Fe) deficiency-inducible genes as well as of genes involved in iron homeostasis, thus contributing to basal tolerance to iron deficiency, iron uptake from soil and iron transport, particularly during seed maturation and germination. Promotes the accumulation of mugineic acid family phytosiderophores (MAs). Required for ethylene-mediated signaling during iron deficiency responses. Improves growth and yield, especially in calcareous soil with low iron availability. Promotes iron concentration in shoots and grain. This is Protein IRON-RELATED TRANSCRIPTION FACTOR 2 from Oryza sativa subsp. japonica (Rice).